A 61-amino-acid chain; its full sequence is MALKITQVKGLVGTKPNHRANMESLGLKRIGHSVVKQDTPIIRGMVHKVRHLVTVEEVAGE.

Belongs to the universal ribosomal protein uL30 family. In terms of assembly, part of the 50S ribosomal subunit.

In Corynebacterium aurimucosum (strain ATCC 700975 / DSM 44827 / CIP 107346 / CN-1) (Corynebacterium nigricans), this protein is Large ribosomal subunit protein uL30.